A 433-amino-acid chain; its full sequence is Oxidoreductase acuF (433 aa).

Its pathway is secondary metabolite biosynthesis. In terms of biological role, oxidoreductase; part of the gene cluster that mediates the biosynthesis of aculins. The pathway begins with the synthesis of 6-methylsalicylic acid by the polyketide synthase (PKS) acuA via condensation of acetate and malonate units. The 6-methylsalicylic acid decarboxylase acuB then catalyzes the decarboxylation of 6-methylsalicylic acid to yield m-cresol (also known as 3-methylphenol). These first reactions occur in the cytosol. The intermediate m-cresol is then transported into the endoplasmic reticulum where the cytochrome P450 monooxygenase acuC converts it to m-hydroxybenzyl alcohol, which is further converted to gentisyl alcohol by the cytochrome P450 monooxygenase acuD. Gentisyl alcohol is further oxidized by the oxidoreductase acuE that probably catalyzes hydroxylation of the aromatic ring. The aromatic system might then be opened by oxidation through a Baeyer-Villiger type of oxidation, which could be catalyzed by acuF, with the carboxylic acid at C-1 subsequently reduced to an aldehyde by acuG. Subsequently, a hemiacetal is formed, before the dehydrogenase acuH would reduce the double bond between C-4 and C-6. Finally, keto-enol tautomerism results in formation of aculinic acid, which exists as two diastereomers (both R/S configurations at C-1) by non-enzymatic hemiacetal formation. The carboxypeptidase acuI could be involved in the linking of aculinic acid to an aculene A moiety produced by the aculene biosynthesis cluster and which leads to the production of aculin A. AcuI may also be involved in the attachment of proline to aculinic acid to form epi-aculins A and B. This is Oxidoreductase acuF from Aspergillus aculeatus (strain ATCC 16872 / CBS 172.66 / WB 5094).